We begin with the raw amino-acid sequence, 112 residues long: Transmembrane protein 14C (112 aa).

Transmembrane regions (helical) follow at residues V7–I27, A32–A52, V62–H82, and P88–F108.

The protein belongs to the TMEM14 family.

The protein resides in the mitochondrion membrane. Its function is as follows. Required for normal heme biosynthesis. This Homo sapiens (Human) protein is Transmembrane protein 14C (TMEM14C).